A 776-amino-acid polypeptide reads, in one-letter code: Calcium-independent phospholipase A2-gamma (776 aa).

Asn4 and Asn157 each carry an N-linked (GlcNAc...) asparagine glycan. Disordered stretches follow at residues Lys216–Ser276 and Lys306–Ala334. Basic and acidic residues-rich tracts occupy residues Gln221–Ser239 and Val247–Leu263. The PNPLA domain maps to Leu439–Leu634. The GXGXXG signature appears at Gly443–Gly448. Residues Leu469–Phe489 form a helical membrane-spanning segment. The short motif at Gly475–Gly479 is the GXSXG element. Catalysis depends on Ser477, which acts as the Nucleophile. Residue Asp621 is the Proton acceptor of the active site. The DGA/G signature appears at Asp621 to Gly623. At Lys730 the chain carries N6-succinyllysine.

In terms of tissue distribution, expressed in myocardium (at protein level).

It localises to the endoplasmic reticulum membrane. It is found in the mitochondrion membrane. The protein resides in the peroxisome membrane. It catalyses the reaction a 1,2-diacyl-sn-glycero-3-phosphocholine + H2O = a 1-acyl-sn-glycero-3-phosphocholine + a fatty acid + H(+). It carries out the reaction a 1,2-diacyl-sn-glycero-3-phosphocholine + H2O = a 2-acyl-sn-glycero-3-phosphocholine + a fatty acid + H(+). The enzyme catalyses a 1,2-diacyl-sn-glycero-3-phosphoethanolamine + H2O = a 1-acyl-sn-glycero-3-phosphoethanolamine + a fatty acid + H(+). The catalysed reaction is a 1-O-(1Z-alkenyl)-2-acyl-sn-glycero-3-phosphocholine + H2O = a 1-O-(1Z-alkenyl)-sn-glycero-3-phosphocholine + a fatty acid + H(+). It catalyses the reaction a 1-acyl-sn-glycero-3-phosphocholine + H2O = sn-glycerol 3-phosphocholine + a fatty acid + H(+). It carries out the reaction 1-hexadecanoyl-2-(5Z,8Z,11Z,14Z-eicosatetraenoyl)-sn-glycero-3-phosphocholine + H2O = 2-(5Z,8Z,11Z,14Z)-eicosatetraenoyl-sn-glycero-3-phosphocholine + hexadecanoate + H(+). The enzyme catalyses 1-acyl-2-(9Z,12Z)-octadecadienoyl-sn-glycero-3-phosphocholine + H2O = a 1-acyl-sn-glycero-3-phosphocholine + (9Z,12Z)-octadecadienoate + H(+). The catalysed reaction is 1-acyl-2-(5Z,8Z,11Z,14Z-eicosatetraenoyl)-sn-glycero-3-phosphocholine + H2O = a 1-acyl-sn-glycero-3-phosphocholine + (5Z,8Z,11Z,14Z)-eicosatetraenoate + H(+). It catalyses the reaction 1-hexadecanoyl-2-(5Z,8Z,11Z,14Z-eicosatetraenoyl)-sn-glycero-3-phosphocholine + H2O = 1-hexadecanoyl-sn-glycero-3-phosphocholine + (5Z,8Z,11Z,14Z)-eicosatetraenoate + H(+). It carries out the reaction 1-octadecanoyl-2-(9Z-octadecenoyl)-sn-glycero-3-phosphocholine + H2O = 1-octadecanoyl-sn-glycero-3-phosphocholine + (9Z)-octadecenoate + H(+). The enzyme catalyses 1-hexadecanoyl-2-(9Z-octadecenoyl)-sn-glycero-3-phosphocholine + H2O = 1-hexadecanoyl-sn-glycero-3-phosphocholine + (9Z)-octadecenoate + H(+). The catalysed reaction is 1-hexadecanoyl-2-(9Z,12Z-octadecadienoyl)-sn-glycero-3-phosphocholine + H2O = (9Z,12Z)-octadecadienoate + 1-hexadecanoyl-sn-glycero-3-phosphocholine + H(+). It catalyses the reaction 1-acyl-2-(9Z,12Z)-octadecadienoyl-sn-glycero-3-phosphoethanolamine + H2O = a 1-acyl-sn-glycero-3-phosphoethanolamine + (9Z,12Z)-octadecadienoate + H(+). It carries out the reaction 1-acyl-2-(5Z,8Z,11Z,14Z)-eicosatetraenoyl-sn-glycero-3-phosphoethanolamine + H2O = a 1-acyl-sn-glycero-3-phosphoethanolamine + (5Z,8Z,11Z,14Z)-eicosatetraenoate + H(+). The enzyme catalyses 1-hexadecanoyl-2-(5Z,8Z,11Z,14Z-eicosatetraenoyl)-sn-glycero-3-phosphoethanolamine + H2O = 1-hexadecanoyl-sn-glycero-3-phosphoethanolamine + (5Z,8Z,11Z,14Z)-eicosatetraenoate + H(+). The catalysed reaction is 1-octadecanoyl-2-(9Z-octadecenoyl)-sn-glycero-3-phosphocholine + H2O = 2-(9Z-octadecenoyl)-sn-glycero-3-phosphocholine + octadecanoate + H(+). It catalyses the reaction 1-hexadecanoyl-2-(4Z,7Z,10Z,13Z,16Z,19Z-docosahexaenoyl)-sn-glycero-3-phosphocholine + H2O = 2-(4Z,7Z,10Z,13Z,16Z,19Z-docosahexaenoyl)-sn-glycero-3-phosphocholine + hexadecanoate + H(+). It carries out the reaction 1-O-(1Z)-hexadecenyl-2 (5Z,8Z,11Z,14Z)-eicosatetraenoyl-sn-glycero-3-phosphocholine + H2O = 1-(1Z-hexadecenyl)-sn-glycero-3-phosphocholine + (5Z,8Z,11Z,14Z)-eicosatetraenoate + H(+). The enzyme catalyses 1-O-(1Z-hexadecenyl)-2-(9Z-octadecenoyl)-sn-glycero-3-phosphocholine + H2O = 1-(1Z-hexadecenyl)-sn-glycero-3-phosphocholine + (9Z)-octadecenoate + H(+). The catalysed reaction is 1-hexadecanoyl-sn-glycero-3-phosphocholine + H2O = sn-glycerol 3-phosphocholine + hexadecanoate + H(+). It catalyses the reaction 1',3'-bis-[1,2-di-(9Z,12Z-octadecadienoyl)-sn-glycero-3-phospho]-glycerol + H2O = 1'-[1,2-di-(9Z,12Z-octadecadienoyl)-sn-glycero-3-phospho]-3'-[1-(9Z,12Z-octadecadienoyl)-sn-glycero-3-phospho]-glycerol + (9Z,12Z)-octadecadienoate + H(+). It carries out the reaction 1'-[1-acyl-2-(9-hydroxy-(10E,12Z)-octadecadienoyl)-sn-glycero-3-phospho]-3'-[1,2-diacyl-sn-glycero-3-phospho]-glycerol + H2O = 9-hydroxy-(10E,12Z)-octadecadienoate + 1'-[1,2-diacyl-sn-glycero-3-phospho],3'-[1-acyl-sn-glycero-3-phospho]-glycerol + H(+). The protein operates within phospholipid metabolism. Its activity is regulated as follows. Calcium-independent phospholipase. Calcium-independent and membrane-bound phospholipase, that catalyzes the esterolytic cleavage of fatty acids from glycerophospholipids to yield free fatty acids and lysophospholipids, hence regulating membrane physical properties and the release of lipid second messengers and growth factors. Hydrolyzes phosphatidylethanolamine, phosphatidylcholine and probably phosphatidylinositol with a possible preference for the former. Also has a broad substrate specificity in terms of fatty acid moieties, hydrolyzing saturated and mono-unsaturated fatty acids at nearly equal rates from either the sn-1 or sn-2 position in diacyl phosphatidylcholine. However, has a weak activity toward polyunsaturated fatty acids at the sn-2 position, and thereby favors the production of 2-arachidonoyl lysophosphatidylcholine, a key branch point metabolite in eicosanoid signaling. On the other hand, can produce arachidonic acid from the sn-1 position of diacyl phospholipid and from the sn-2 position of arachidonate-containing plasmalogen substrates. Therefore, plays an important role in the mobilization of arachidonic acid in response to cellular stimuli and the generation of lipid second messengers. Can also hydrolyze lysophosphatidylcholine. In the mitochondrial compartment, catalyzes the hydrolysis and release of oxidized aliphatic chains from cardiolipin and integrates mitochondrial bioenergetics and signaling. It is essential for maintaining efficient bioenergetic mitochondrial function through tailoring mitochondrial membrane lipid metabolism and composition. The sequence is that of Calcium-independent phospholipase A2-gamma from Mus musculus (Mouse).